The sequence spans 953 residues: Dual serine/threonine and tyrosine protein kinase (953 aa).

Residues 665-926 (PKLEREIGRG…VQSKLQDIYT (262 aa)) enclose the Protein kinase domain. ATP contacts are provided by residues 671–679 (IGRGQYGVV) and Lys694. Asp791 (proton acceptor) is an active-site residue. The tract at residues 932–953 (REAEGGGGGGAKEQQNLKSDTL) is disordered.

The protein belongs to the protein kinase superfamily. Ser/Thr protein kinase family.

Its subcellular location is the cytoplasm. It is found in the cell membrane. The protein resides in the apical cell membrane. It localises to the basolateral cell membrane. The protein localises to the cell junction. It carries out the reaction L-seryl-[protein] + ATP = O-phospho-L-seryl-[protein] + ADP + H(+). The catalysed reaction is L-threonyl-[protein] + ATP = O-phospho-L-threonyl-[protein] + ADP + H(+). The enzyme catalyses L-tyrosyl-[protein] + ATP = O-phospho-L-tyrosyl-[protein] + ADP + H(+). May act as a positive regulator of ERK phosphorylation downstream of fibroblast growth factor-receptor activation. May induce both caspase-dependent apoptosis and caspase-independent cell death. May play a role in the embryonic development. The protein is Dual serine/threonine and tyrosine protein kinase of Strongylocentrotus purpuratus (Purple sea urchin).